Reading from the N-terminus, the 368-residue chain is MSLFGSTSGFGTGGTSMFGSTTTDNHNPMKDIEVTSSPDDSIGCLSFSPPTLPGNFLIAGSWANDVRCWEVQDSGQTIPKAQQMHTGPVLDVCWSDDGSKVFTASCDKTAKMWDLNSNQAIQIAQHDAPVKTIHWIKAPNYSCVMTGSWDKTLKFWDTRSSNPMMVLQLPERCYCADVIYPMAVVATAERGLIVYQLENQPSEFRRIESPLKHQHRCVAIFKDKQNKPTGFALGSIEGRVAIHYINPPNPAKDNFTFKCHRSNGTNTSAPQDIYAVNGIAFHPVHGTLATVGSDGRFSFWDKDARTKLKTSEQLDQPIAACCFNHNGNIFAYASSYDWSKGHEFYNPQKKNYIFLRNAAEELKPRNKK.

The tract at residues 15–34 (TSMFGSTTTDNHNPMKDIEV) is disordered. WD repeat units lie at residues 37-79 (SPDD…QTIP), 84-114 (MHTG…KMWD), 125-157 (QHDA…KFWD), 168-206 (QLPE…EFRR), 215-255 (HRCV…KDNF), 271-301 (QDIY…SFWD), and 310-346 (TSEQ…EFYN). T229 is modified (phosphothreonine).

The protein belongs to the WD repeat rae1 family. In terms of assembly, interacts with NUMA1 (via N-terminal end of the coiled-coil domain); this interaction promotes spindle formation in mitosis. Interacts with NUP98. Interacts with MYCBP2. Interacts with USP11.

Its subcellular location is the cytoplasm. It localises to the nucleus. The protein localises to the cytoskeleton. The protein resides in the spindle pole. Functionally, plays a role in mitotic bipolar spindle formation. Binds mRNA. May function in nucleocytoplasmic transport and in directly or indirectly attaching cytoplasmic mRNPs to the cytoskeleton. This Mus musculus (Mouse) protein is mRNA export factor (Rae1).